The following is a 209-amino-acid chain: MLGLIGKKVGMTQVFQGNGVVVPVTVIEFEPNYVIGKKTVERDGYDALIMGSVDLRSSKISKPIRGQYKNLENVEPKRYVIEFKGLKGYDAGDEIGLDAFREIKYVDITGTTKGKGFQGAMKRHNFSGGPSSHGSKFHRHLGGTGQATTPARTFKGTKMAGRMGGEQQTIQNLEVVFIDEEKRAILVKGAVPGVKGSFVIVKKAKKVGV.

Positions 127-151 are disordered; sequence SGGPSSHGSKFHRHLGGTGQATTPA.

This sequence belongs to the universal ribosomal protein uL3 family. As to quaternary structure, part of the 50S ribosomal subunit. Forms a cluster with proteins L14 and L19.

One of the primary rRNA binding proteins, it binds directly near the 3'-end of the 23S rRNA, where it nucleates assembly of the 50S subunit. The chain is Large ribosomal subunit protein uL3 from Borrelia turicatae (strain 91E135).